The following is a 247-amino-acid chain: DNA polymerase sliding clamp (247 aa).

The protein belongs to the PCNA family. Homotrimer. The subunits circularize to form a toroid; DNA passes through its center. Replication factor C (RFC) is required to load the toroid on the DNA.

Its function is as follows. Sliding clamp subunit that acts as a moving platform for DNA processing. Responsible for tethering the catalytic subunit of DNA polymerase and other proteins to DNA during high-speed replication. This Halobacterium salinarum (strain ATCC 29341 / DSM 671 / R1) protein is DNA polymerase sliding clamp.